We begin with the raw amino-acid sequence, 367 residues long: Leucine-rich repeat-containing protein 28 (367 aa).

LRR repeat units lie at residues 16–36 (KHKN…ELLK), 42–63 (YLER…LAQK), 66–87 (NLVE…IGSL), 89–111 (KLQS…GRLK), 112–133 (SLRH…IGKL), 135–156 (ELQT…LYQC), 158–179 (SLQY…LCQL), 181–202 (SLNE…LGRS), and 204–226 (ELQY…LYNK).

The sequence is that of Leucine-rich repeat-containing protein 28 (lrrc28) from Xenopus tropicalis (Western clawed frog).